A 207-amino-acid chain; its full sequence is dTTP/UTP pyrophosphatase (207 aa).

The active-site Proton acceptor is Asp68.

This sequence belongs to the Maf family. YhdE subfamily. Requires a divalent metal cation as cofactor.

It localises to the cytoplasm. The catalysed reaction is dTTP + H2O = dTMP + diphosphate + H(+). It carries out the reaction UTP + H2O = UMP + diphosphate + H(+). Its function is as follows. Nucleoside triphosphate pyrophosphatase that hydrolyzes dTTP and UTP. May have a dual role in cell division arrest and in preventing the incorporation of modified nucleotides into cellular nucleic acids. The chain is dTTP/UTP pyrophosphatase from Staphylothermus marinus (strain ATCC 43588 / DSM 3639 / JCM 9404 / F1).